A 332-amino-acid chain; its full sequence is Homoarginine-6-hydroxylase 2-ODD-C23.1 (332 aa).

One can recognise a Fe2OG dioxygenase domain in the interval 182–287; the sequence is PFWVMRLIGY…RVCVAFFYET (106 aa). His-210, Asp-212, and His-268 together coordinate Fe cation. Arg-278 is a binding site for 2-oxoglutarate.

This sequence belongs to the iron/ascorbate-dependent oxidoreductase family. The cofactor is Fe(2+).

Its subcellular location is the cytoplasm. It is found in the cytosol. The catalysed reaction is L-homoarginine + 2-oxoglutarate + O2 = 6-hydroxy-L-homoarginine + succinate + CO2. With respect to regulation, slightly inhibited by canavanine (Can), the 5-oxa-analog of arginine. Its function is as follows. 2-oxoglutarate-dependent dioxygenase catalyzing homoarginine 6-hydroxylation thus producing 6-hydroxy-L-homoarginine. Guanidine (Gd) is in turn synthesized by the spontaneous conversion of 6-hydroxy-L-homoarginine to (S)-2-amino-6-oxohexanoate (RHEA:79843); guanidine is a nitrogen-rich compound that can serve as a defense or signaling substance. This is Homoarginine-6-hydroxylase 2-ODD-C23.1 from Arabidopsis thaliana (Mouse-ear cress).